Consider the following 317-residue polypeptide: Olfactory receptor 51Q1 (317 aa).

The Extracellular portion of the chain corresponds to 1–27 (MSQVTNTTQEGIYFILTDIPGFEASHI). Asparagine 6 carries N-linked (GlcNAc...) asparagine glycosylation. The helical transmembrane segment at 28–48 (WISIPVCCLYTISIMGNTTIL) threads the bilayer. The Cytoplasmic portion of the chain corresponds to 49 to 56 (TVIRTEPS). A helical transmembrane segment spans residues 57-77 (VHQRMYLFLSMLALTDLGLTL). At 78 to 101 (TTLPTVMQLLWFNVRRISSEACFA) the chain is on the extracellular side. A disulfide bond links cysteine 99 and cysteine 191. Residues 102 to 122 (QFFFLHGFSFMESSVLLAMSV) traverse the membrane as a helical segment. Residues 123 to 141 (DCYVAICCPLHYASILTNE) lie on the Cytoplasmic side of the membrane. Residues 142-162 (VIGRTGLAIICCCVLAVLPSL) traverse the membrane as a helical segment. Topologically, residues 163-198 (FLLKRLPFCHSHLLSRSYCLHQDMIRLVCADIRLNS) are extracellular. The chain crosses the membrane as a helical span at residues 199 to 219 (WYGFALALLIIIVDPLLIVIS). The Cytoplasmic segment spans residues 220–239 (YTLILKNILGTATWAERLRA). A helical membrane pass occupies residues 240-260 (LNNCLSHILAVLVLYIPMVGV). Topologically, residues 261-275 (SMTHRFAKHASPLVH) are extracellular. The helical transmembrane segment at 276–296 (VIMANIYLLAPPVMNPIIYSV) threads the bilayer. At 297–317 (KNKQIQWGMLNFLSLKNMHSR) the chain is on the cytoplasmic side.

Belongs to the G-protein coupled receptor 1 family.

It is found in the cell membrane. Odorant receptor. The protein is Olfactory receptor 51Q1 (OR51Q1) of Homo sapiens (Human).